The primary structure comprises 354 residues: Guanine nucleotide-binding protein alpha-12 subunit (354 aa).

A G-alpha domain is found at 31–354; sequence QPLKLLLLGS…SLLMNVAEIL (324 aa). Residues 34–47 are G1 motif; that stretch reads KLLLLGSGECGKST. GTP contacts are provided by residues 39–46, 178–184, 203–207, 272–275, and Ala329; these read GSGECGKS, LRVRVKT, DVGGQ, and NKID. Mg(2+) contacts are provided by Ser46 and Thr184. The interval 176–184 is G2 motif; the sequence is DFLRVRVKT. The tract at residues 199-208 is G3 motif; that stretch reads FKLVDVGGQK. The segment at 268–275 is G4 motif; the sequence is VLFFNKID. Positions 327–332 are G5 motif; that stretch reads TCALDS.

It belongs to the G-alpha family. G proteins are composed of 3 units; alpha, beta and gamma. The alpha chain contains the guanine nucleotide binding site.

In terms of biological role, guanine nucleotide-binding proteins (G proteins) are involved as modulators or transducers in various transmembrane signaling systems. The sequence is that of Guanine nucleotide-binding protein alpha-12 subunit (gpaL) from Dictyostelium discoideum (Social amoeba).